A 418-amino-acid polypeptide reads, in one-letter code: Hepatic and glial cell adhesion molecule (418 aa).

The N-terminal stretch at 1-33 is a signal peptide; sequence MKRERGALSRASRALRLSPFVYLLLIQPVPLEG. Residues 34 to 142 enclose the Ig-like V-type domain; that stretch reads VNITSPVRLI…GEKTINLTVD (109 aa). Over 34–240 the chain is Extracellular; that stretch reads VNITSPVRLI…VKITVYRRSS (207 aa). N-linked (GlcNAc...) asparagine glycosylation is found at N35, N138, N167, and N189. The Ig-like C2-type domain maps to 148 to 234; sequence PQVLVASTTV…QVRSLPVKIT (87 aa). C168 and C217 are joined by a disulfide. A helical membrane pass occupies residues 241 to 261; the sequence is LYIILSTGGIFLLVTLVTVCA. Over 262–418 the chain is Cytoplasmic; it reads CWKPSKKSRK…DESGQVEISA (157 aa). The tract at residues 271 to 418 is disordered; the sequence is KKRKLEKQNS…DESGQVEISA (148 aa). S280 is subject to Phosphoserine. Basic and acidic residues predominate over residues 287–308; it reads NDDRLKSEADTLPRSGEQERKN. S321, S352, and S379 each carry phosphoserine. Over residues 341 to 358 the composition is skewed to low complexity; sequence GYSVSPPVPGRSPGLPIR. Low complexity predominate over residues 385–396; that stretch reads SSPGRSRSSSRS.

Homodimer. Dimer formation occurs predominantly through cis interactions on the cell surface. Part of a complex containing MLC1, TRPV4, AQP4 and ATP1B1. Interacts with CLCN2. In terms of processing, N-glycosylated.

The protein resides in the cytoplasm. It is found in the cell membrane. Its function is as follows. Involved in regulating cell motility and cell-matrix interactions. May inhibit cell growth through suppression of cell proliferation. In glia, associates and targets CLCN2 at astrocytic processes and myelinated fiber tracts where it may regulate transcellular chloride flux involved in neuron excitability. The polypeptide is Hepatic and glial cell adhesion molecule (Mus musculus (Mouse)).